Consider the following 325-residue polypeptide: Tetraacyldisaccharide 4'-kinase (325 aa).

55-62 serves as a coordination point for ATP; that stretch reads TAGGNGKT.

This sequence belongs to the LpxK family.

It carries out the reaction a lipid A disaccharide + ATP = a lipid IVA + ADP + H(+). It participates in glycolipid biosynthesis; lipid IV(A) biosynthesis; lipid IV(A) from (3R)-3-hydroxytetradecanoyl-[acyl-carrier-protein] and UDP-N-acetyl-alpha-D-glucosamine: step 6/6. In terms of biological role, transfers the gamma-phosphate of ATP to the 4'-position of a tetraacyldisaccharide 1-phosphate intermediate (termed DS-1-P) to form tetraacyldisaccharide 1,4'-bis-phosphate (lipid IVA). The chain is Tetraacyldisaccharide 4'-kinase from Salmonella agona (strain SL483).